A 171-amino-acid polypeptide reads, in one-letter code: Large ribosomal subunit protein uL10 (171 aa).

This sequence belongs to the universal ribosomal protein uL10 family. As to quaternary structure, part of the ribosomal stalk of the 50S ribosomal subunit. The N-terminus interacts with L11 and the large rRNA to form the base of the stalk. The C-terminus forms an elongated spine to which L12 dimers bind in a sequential fashion forming a multimeric L10(L12)X complex.

Functionally, forms part of the ribosomal stalk, playing a central role in the interaction of the ribosome with GTP-bound translation factors. The chain is Large ribosomal subunit protein uL10 from Nitrosomonas europaea (strain ATCC 19718 / CIP 103999 / KCTC 2705 / NBRC 14298).